The sequence spans 514 residues: Membrane-bound lytic murein transglycosylase F (514 aa).

An N-terminal signal peptide occupies residues Met-1–Gly-30. The tract at residues Lys-31–Gly-269 is non-LT domain. The segment at Asp-270–Lys-514 is LT domain. Residue Glu-314 is part of the active site.

This sequence in the N-terminal section; belongs to the bacterial solute-binding protein 3 family. In the C-terminal section; belongs to the transglycosylase Slt family.

Its subcellular location is the cell outer membrane. It carries out the reaction Exolytic cleavage of the (1-&gt;4)-beta-glycosidic linkage between N-acetylmuramic acid (MurNAc) and N-acetylglucosamine (GlcNAc) residues in peptidoglycan, from either the reducing or the non-reducing ends of the peptidoglycan chains, with concomitant formation of a 1,6-anhydrobond in the MurNAc residue.. Functionally, murein-degrading enzyme that degrades murein glycan strands and insoluble, high-molecular weight murein sacculi, with the concomitant formation of a 1,6-anhydromuramoyl product. Lytic transglycosylases (LTs) play an integral role in the metabolism of the peptidoglycan (PG) sacculus. Their lytic action creates space within the PG sacculus to allow for its expansion as well as for the insertion of various structures such as secretion systems and flagella. The sequence is that of Membrane-bound lytic murein transglycosylase F from Salmonella paratyphi B (strain ATCC BAA-1250 / SPB7).